Here is a 289-residue protein sequence, read N- to C-terminus: Iron-sulfur cluster carrier protein (289 aa).

A compositionally biased stretch (low complexity) spans 1–18; sequence MAEECSGNCDSCGSSSDC. Residues 1-20 form a disordered region; that stretch reads MAEECSGNCDSCGSSSDCSD. ATP is bound at residue 48 to 55; sequence GKGGVGKS.

Belongs to the Mrp/NBP35 ATP-binding proteins family. As to quaternary structure, homodimer.

Functionally, binds and transfers iron-sulfur (Fe-S) clusters to target apoproteins. Can hydrolyze ATP. In Methanococcus maripaludis (strain DSM 14266 / JCM 13030 / NBRC 101832 / S2 / LL), this protein is Iron-sulfur cluster carrier protein.